Here is a 242-residue protein sequence, read N- to C-terminus: N-alpha-acetyltransferase 60 (242 aa).

Residues 1–192 (MTEVVPSSAL…GGHPPWTILD (192 aa)) lie on the Cytoplasmic side of the membrane. One can recognise an N-acetyltransferase domain in the interval 13 to 182 (VSLRLLCHDD…DGFTYVLYIN (170 aa)). Y38 is a substrate binding site. Residue K79 is modified to N6-acetyllysine; by autocatalysis. The active site involves Y97. L99 is a binding site for substrate. An acetyl-CoA-binding site is contributed by 101–103 (LGV). K105, K109, and K121 each carry N6-acetyllysine; by autocatalysis. 109 to 114 (KHGIGS) serves as a coordination point for acetyl-CoA. Residue H138 is part of the active site. Acetyl-CoA is bound by residues N143 and 150 to 153 (YENR). The required for homodimerization stretch occupies residues 162 to 173 (PYYYSIRGVLKD). Residue Y165 coordinates substrate. The helical intramembrane region spans 193–236 (YIQHLGSALANLSPCSIPHRIYRQAHSLLCSFLPWSSISTKGGI). At 237-242 (EYSRTM) the chain is on the cytoplasmic side.

This sequence belongs to the acetyltransferase family. NAA60 subfamily. In terms of assembly, monomer and homodimer; monomer in presence of substrate and homodimer in its absence. In terms of processing, acetylated: autoacetylation is required for optimal acetyltransferase activity.

Its subcellular location is the golgi apparatus membrane. It catalyses the reaction N-terminal L-methionyl-[transmembrane protein] + acetyl-CoA = N-terminal N(alpha)-acetyl-L-methionyl-[transmembrane protein] + CoA + H(+). It carries out the reaction L-lysyl-[protein] + acetyl-CoA = N(6)-acetyl-L-lysyl-[protein] + CoA + H(+). In terms of biological role, N-alpha-acetyltransferase that specifically mediates the acetylation of N-terminal residues of the transmembrane proteins, with a strong preference for N-termini facing the cytosol. Displays N-terminal acetyltransferase activity towards a range of N-terminal sequences including those starting with Met-Lys, Met-Val, Met-Ala and Met-Met. Required for normal chromosomal segregation during anaphase. May also show histone acetyltransferase activity; such results are however unclear in vivo and would require additional experimental evidences. This chain is N-alpha-acetyltransferase 60 (Naa60), found in Mus musculus (Mouse).